A 178-amino-acid polypeptide reads, in one-letter code: Thioredoxin F1, chloroplastic (178 aa).

The interval 1 to 22 (MPLSLRLSPSPTALSPTTGGFG) is disordered. The N-terminal 57 residues, 1–57 (MPLSLRLSPSPTALSPTTGGFGPSRKQCRIPYSGVPTTKIGFCSLDSRKRGDSSVVR), are a transit peptide targeting the chloroplast. Over residues 7–18 (LSPSPTALSPTT) the composition is skewed to polar residues. The Thioredoxin domain occupies 58–174 (CSLETVNVSV…LVAAIETARS (117 aa)). Residues Cys-99 and Cys-102 each act as nucleophile in the active site. The cysteines at positions 99 and 102 are disulfide-linked. Residue Cys-126 is modified to S-glutathionyl cysteine; transient.

It belongs to the thioredoxin family. Plant F-type subfamily. In terms of processing, glutathionylation at Cys-126 decreases its ability to be reduced by ferredoxin-thioredoxin reductase and reduces its efficiency in activating target chloroplastic enzymes.

The protein localises to the plastid. It is found in the chloroplast stroma. Its function is as follows. Thiol-disulfide oxidoreductase involved in the redox regulation of enzymes of both reductive pentose phosphate pathway (Calvin-Benson cycle) and oxidative pentose phosphate pathway. Under light or reducing conditions, activates in chloroplast the glyceraldehyde-3-phosphate dehydrogenase, the phosphoribulokinase and the fructose-1,6-bisphosphate phosphatase, and inhibits the glucose-6-phosphate dehydrogenase. This Arabidopsis thaliana (Mouse-ear cress) protein is Thioredoxin F1, chloroplastic.